The primary structure comprises 149 residues: Ribosomal RNA large subunit methyltransferase H (149 aa).

Residues L71, G98, and 117–122 contribute to the S-adenosyl-L-methionine site; that span reads LSKMTL.

Belongs to the RNA methyltransferase RlmH family. As to quaternary structure, homodimer.

The protein resides in the cytoplasm. The enzyme catalyses pseudouridine(1915) in 23S rRNA + S-adenosyl-L-methionine = N(3)-methylpseudouridine(1915) in 23S rRNA + S-adenosyl-L-homocysteine + H(+). Its function is as follows. Specifically methylates the pseudouridine at position 1915 (m3Psi1915) in 23S rRNA. This chain is Ribosomal RNA large subunit methyltransferase H, found in Campylobacter fetus subsp. fetus (strain 82-40).